The chain runs to 298 residues: uncharacterized protein (298 aa).

It belongs to the glycosyltransferase 2 family.

This is an uncharacterized protein from Mycoplasma genitalium (strain ATCC 33530 / DSM 19775 / NCTC 10195 / G37) (Mycoplasmoides genitalium).